The following is a 95-amino-acid chain: Aspartyl/glutamyl-tRNA(Asn/Gln) amidotransferase subunit C (95 aa).

It belongs to the GatC family. As to quaternary structure, heterotrimer of A, B and C subunits.

It carries out the reaction L-glutamyl-tRNA(Gln) + L-glutamine + ATP + H2O = L-glutaminyl-tRNA(Gln) + L-glutamate + ADP + phosphate + H(+). It catalyses the reaction L-aspartyl-tRNA(Asn) + L-glutamine + ATP + H2O = L-asparaginyl-tRNA(Asn) + L-glutamate + ADP + phosphate + 2 H(+). Allows the formation of correctly charged Asn-tRNA(Asn) or Gln-tRNA(Gln) through the transamidation of misacylated Asp-tRNA(Asn) or Glu-tRNA(Gln) in organisms which lack either or both of asparaginyl-tRNA or glutaminyl-tRNA synthetases. The reaction takes place in the presence of glutamine and ATP through an activated phospho-Asp-tRNA(Asn) or phospho-Glu-tRNA(Gln). The protein is Aspartyl/glutamyl-tRNA(Asn/Gln) amidotransferase subunit C of Methylorubrum extorquens (strain CM4 / NCIMB 13688) (Methylobacterium extorquens).